The following is a 653-amino-acid chain: Ran-binding protein 9 (653 aa).

A compositionally biased stretch (pro residues) spans 1-21 (MSGQPPPPPPQQQPPPPPPPA). Residues 1–62 (MSGQPPPPPP…SAAAPFPHGD (62 aa)) are disordered. Residues 22-57 (SAAAPATAPPGLAVGPGPAAGVPVPGLAAGSSAAAP) show a composition bias toward low complexity. In terms of domain architecture, B30.2/SPRY spans 72–259 (LQRRLKRLYP…VDANFGQHPF (188 aa)). The 33-residue stretch at 290 to 322 (WQTMIQKMVSSYLVHHGYCATAEAFARSTDQTV) folds into the LisH domain. The tract at residues 326–332 (LASIKNR) is interaction with CALB1. In terms of domain architecture, CTLH spans 328-385 (SIKNRQRIQKLVLAGRMGEAIETTQQLYPSLLERNPNLLFTLKVRQFIEMVNGTDSEV). The residue at position 330 (Lys-330) is an N6-acetyllysine. Residues 386-422 (RCLGGRSPKSQDSYPVSPRPFSSPSMSPSHGMSIHSL) form a disordered region. Low complexity predominate over residues 398-421 (SYPVSPRPFSSPSMSPSHGMSIHS). Residues Ser-402 and Ser-412 each carry the phosphoserine modification. Positions 539–653 (AAIERMIHFG…AFATVEDYLH (115 aa)) are interaction with FMR1.

This sequence belongs to the RANBP9/10 family. Part of a complex consisting of RANBP9, MKLN1 and GID8. Identified in the CTLH complex that contains GID4, RANBP9 and/or RANBP10, MKLN1, MAEA, RMND5A (or alternatively its paralog RMND5B), GID8, ARMC8, WDR26 and YPEL5. Within this complex, MAEA, RMND5A (or alternatively its paralog RMND5B), GID8, WDR26, and RANBP9 and/or RANBP10 form the catalytic core, while GID4, MKLN1, ARMC8 and YPEL5 have ancillary roles. Interacts with GTP-bound Ran, AR, CDC2L1/p110C, CALB1, S100A7, USP11, SOS1 or SOS2, GID8, and FMR1. Interacts with the Dyrk kinases HIPK2, DYRK1A, and DYRK1B. Interacts with TP73 isoform Alpha but not with TP53. Interacts with the HGF receptor MET and the integrins ITGB1 and ITGB2, but not with ITGAL. Part of a complex consisting of RANBP9, RAN, DYRK1B and COPS5. Directly interacts with RANBP10. Interacts with YPEL5. Interacts with MKLN1. Interacts with DDX4. Interacts with NGFR. Interacts with Tex19.1 and, probably, Tex19.2. In terms of processing, phosphorylated in response to stress. Post-translationally, ubiquitinated. Polyubiquitination targets the protein for rapid degradation via the ubiquitin system. In terms of tissue distribution, ubiquitously expressed, with highest levels in maturating spermatocytes.

Its subcellular location is the cytoplasm. It localises to the cell membrane. The protein resides in the nucleus. Functionally, may act as scaffolding protein, and as adapter protein to couple membrane receptors to intracellular signaling pathways. Acts as a mediator of cell spreading and actin cytoskeleton rearrangement. Core component of the CTLH E3 ubiquitin-protein ligase complex that selectively accepts ubiquitin from UBE2H and mediates ubiquitination and subsequent proteasomal degradation of the transcription factor HBP1. May be involved in signaling of ITGB2/LFA-1 and other integrins. Enhances HGF-MET signaling by recruiting Sos and activating the Ras pathway. Enhances dihydrotestosterone-induced transactivation activity of AR, as well as dexamethasone-induced transactivation activity of NR3C1, but not affect estrogen-induced transactivation. Stabilizes TP73 isoform Alpha, probably by inhibiting its ubiquitination, and increases its proapoptotic activity. Inhibits the kinase activity of DYRK1A and DYRK1B. Inhibits FMR1 binding to RNA. This is Ran-binding protein 9 from Mus musculus (Mouse).